The following is a 210-amino-acid chain: Redox-sensing transcriptional repressor Rex (210 aa).

The segment at residues 17 to 56 (KYYRYLAELMDNDVDRISSKELSEKIGFTASQIRQDLNNF) is a DNA-binding region (H-T-H motif). Residue 91-96 (GAGNIG) coordinates NAD(+).

Belongs to the transcriptional regulatory Rex family. Homodimer.

The protein localises to the cytoplasm. Its function is as follows. Modulates transcription in response to changes in cellular NADH/NAD(+) redox state. This chain is Redox-sensing transcriptional repressor Rex, found in Clostridium novyi (strain NT).